A 130-amino-acid polypeptide reads, in one-letter code: Small ribosomal subunit protein bS6 (130 aa).

Residues 100–130 (SPMVKAKDERRERHDFASEANDDSEAGDSEE) form a disordered region. Residues 104-116 (KAKDERRERHDFA) show a composition bias toward basic and acidic residues. Over residues 119–130 (ANDDSEAGDSEE) the composition is skewed to acidic residues.

Belongs to the bacterial ribosomal protein bS6 family.

In terms of biological role, binds together with bS18 to 16S ribosomal RNA. This is Small ribosomal subunit protein bS6 from Yersinia pestis (strain Pestoides F).